A 214-amino-acid polypeptide reads, in one-letter code: Thiamine import ATP-binding protein ThiQ (214 aa).

An ABC transporter domain is found at I2–I212. G31 to S38 serves as a coordination point for ATP.

Belongs to the ABC transporter superfamily. Thiamine importer (TC 3.A.1.19.1) family. As to quaternary structure, the complex is composed of two ATP-binding proteins (ThiQ), two transmembrane proteins (ThiP) and a solute-binding protein (ThiB).

It is found in the cell inner membrane. It catalyses the reaction thiamine(out) + ATP + H2O = thiamine(in) + ADP + phosphate + H(+). Functionally, part of the ABC transporter complex ThiBPQ involved in thiamine import. Responsible for energy coupling to the transport system. The polypeptide is Thiamine import ATP-binding protein ThiQ (Histophilus somni (strain 129Pt) (Haemophilus somnus)).